We begin with the raw amino-acid sequence, 169 residues long: CRISPR system Cmr subunit Cmr5 (169 aa).

Belongs to the CRISPR system Cmr5 family. As to quaternary structure, monomer in isolation. Part of the type III-B Cmr ribonucleoprotein (RNP) complex, an elongated RNP with Cmr2 and Cmr3 as the base, with Cmr4 and Cmr5 forming a helical core along the mature crRNA (39 or 45 nt in length), while the complex is capped by Cmr6 and Cmr1. The 5' end of the crRNA is bound to Cmr2 and Cmr3, while Cmr6 and a Cmr1 subunit (Cmr1-1 or Cmr1-2) cap the 3' end of the crRNA. The target RNA lies antiparallel to the crRNA, with its 5' end near Cmr1 and Cmr6 and its 3' end near Cmr2 and Cmr3; major target cleavage occurs nears the junction of Cmr1/Cmr6 and Cmr4/Cmr, with minor cleavage occurring at 6 nt intervals which coincide with the proposed spacing of Cmr4 subunits. Interacts with Cmr4. Interacts with Cmr2, Cmr4 and Cmr6.

It is found in the cytoplasm. CRISPR (clustered regularly interspaced short palindromic repeat), is an adaptive immune system that provides protection against mobile genetic elements (viruses, transposable elements and conjugative plasmids). CRISPR clusters contain sequences complementary to antecedent mobile elements and target invading nucleic acids. CRISPR clusters are transcribed and processed into CRISPR RNA (crRNA), formerly called psiRNA (prokaryotic silencing) in this organism. Part of the Cmr ribonucleoprotein complex which has divalent cation-dependent endoribonuclease activity specific for ssRNA complementary to the crRNA (target NRA), generating 5' hydroxy- and 3' phosphate or 2'-3' cyclic phosphate termini. Cmr4 is probably the subunit that cleaves target RNA. Cmr complex does not cleave ssDNA complementary to the crRNA. Cleavage of invading RNA is guided by the crRNA; substrate cleavage occurs a fixed distance (14 nt) from the 3' end of the crRNA. In vitro reconstitution shows Cmr1-2 and Cmr5 are not absolutely necessary for target cleavage. This Pyrococcus furiosus (strain ATCC 43587 / DSM 3638 / JCM 8422 / Vc1) protein is CRISPR system Cmr subunit Cmr5.